The following is a 104-amino-acid chain: Large ribosomal subunit protein uL24 (104 aa).

The protein belongs to the universal ribosomal protein uL24 family. Part of the 50S ribosomal subunit.

One of two assembly initiator proteins, it binds directly to the 5'-end of the 23S rRNA, where it nucleates assembly of the 50S subunit. Functionally, one of the proteins that surrounds the polypeptide exit tunnel on the outside of the subunit. This chain is Large ribosomal subunit protein uL24, found in Shewanella piezotolerans (strain WP3 / JCM 13877).